Reading from the N-terminus, the 360-residue chain is Arginase, non-hepatic 1 (360 aa).

Residues His122, Asp145, His147, and Asp149 each contribute to the Mn(2+) site. Substrate is bound by residues 147-151 (HADIN), 158-160 (SGN), and Asp204. Mn(2+)-binding residues include Asp253 and Asp255. Thr267 and Glu298 together coordinate substrate.

Belongs to the arginase family. As to quaternary structure, homotrimer. Mn(2+) serves as cofactor. Expressed at differing tadpole stages in tail, intestine, hindlimb and trunk region. Most abundant in tadpole tail.

It catalyses the reaction L-arginine + H2O = urea + L-ornithine. It participates in nitrogen metabolism; urea cycle; L-ornithine and urea from L-arginine: step 1/1. In terms of biological role, as well as its role in the urea cycle, may be involved in tissue remodeling. This chain is Arginase, non-hepatic 1 (arg2-a), found in Xenopus laevis (African clawed frog).